We begin with the raw amino-acid sequence, 140 residues long: Putative pre-16S rRNA nuclease (140 aa).

Belongs to the YqgF nuclease family.

The protein localises to the cytoplasm. Could be a nuclease involved in processing of the 5'-end of pre-16S rRNA. This is Putative pre-16S rRNA nuclease from Vibrio cholerae serotype O1 (strain ATCC 39541 / Classical Ogawa 395 / O395).